A 135-amino-acid chain; its full sequence is MTGGGKSGGKASSGKNAQSRSSKAGLAFPVGRVHRLLRKGNYAQRVGAGAPVYLAAVLEYLAAEILELAGNAARDNKKTRIIPRHLQLAIRNDEELNKLLGHVTIAQGGVLPNIHQNLLPKKTGTKPGKNASQEL.

Positions 1-24 are disordered; it reads MTGGGKSGGKASSGKNAQSRSSKA. N6-acetyllysine is present on residues Lys6 and Lys10. Gln107 bears the N5-methylglutamine mark. Ser132 is modified (phosphoserine). The [ST]-Q motif motif lies at 132-133; sequence SQ.

Belongs to the histone H2A family. As to quaternary structure, the nucleosome is a histone octamer containing two molecules each of H2A, H2B, H3 and H4 assembled in one H3-H4 heterotetramer and two H2A-H2B heterodimers. The octamer wraps approximately 147 bp of DNA. In terms of processing, phosphorylated to form H2AS128ph (gamma-H2A) in response to DNA double-strand breaks (DSBs) generated by exogenous genotoxic agents and by stalled replication forks. Phosphorylation is dependent on the DNA damage checkpoint kinases MEC1/ATR and TEL1/ATM, spreads on either side of a detected DSB site and may mark the surrounding chromatin for recruitment of proteins required for DNA damage signaling and repair. Gamma-H2A is removed from the DNA prior to the strand invasion-primer extension step of the repair process and subsequently dephosphorylated. Dephosphorylation is necessary for efficient recovery from the DNA damage checkpoint. Post-translationally, acetylated by ESA1 to form H2AK4ac and H2AK7ac.

It localises to the nucleus. It is found in the chromosome. Core component of nucleosome which plays a central role in DNA double strand break (DSB) repair. Nucleosomes wrap and compact DNA into chromatin, limiting DNA accessibility to the cellular machineries which require DNA as a template. Histones thereby play a central role in transcription regulation, DNA repair, DNA replication and chromosomal stability. DNA accessibility is regulated via a complex set of post-translational modifications of histones, also called histone code, and nucleosome remodeling. This chain is Histone H2A (HTA1), found in Podospora anserina (Pleurage anserina).